Here is a 385-residue protein sequence, read N- to C-terminus: MYAKGGKGSAVPSDSQAREKLALYVYEYLLHIGAQKSAQTFLSEIRWEKNITLGEPPGFLHSWWCVFWDLYCAAPDRREACEHSGEAKAFQDYSAAAAPSPVMGSMAPGDTMAAGSMAAGFFQGPPGSQPSPHNPNAPMMGPHGQPFMSPRFPGGPRPTLRMPSQPPAGLPGSQPLLPGAMEPSPRAQGHPSMGGPMQRVTPPRGMASVGPQSYGGGMRPPPNSLAGPGLPAMNMGPGVRGPWASPSGNSIPYSSSSPGSYTGPPGGGGPPGTPIMPSPGDSTNSSENMYTIMNPIGQGAGRANFPLGPGPEGPMAAMSAMEPHHVNGSLGSGDMDGLPKSSPGAVAGLSNAPGTPRDDGEMAAAGTFLHPFPSESYSPGMTMSV.

Methionine 1 carries the N-acetylmethionine modification. The LisH domain occupies 17-49 (AREKLALYVYEYLLHIGAQKSAQTFLSEIRWEK). Disordered regions lie at residues 122 to 287 (FQGP…NSSE) and 331 to 363 (GSGDMDGLPKSSPGAVAGLSNAPGTPRDDGEMA). Over residues 245–263 (SPSGNSIPYSSSSPGSYTG) the composition is skewed to low complexity. Residues 267 to 277 (GGGPPGTPIMP) show a composition bias toward pro residues. The residue at position 341 (serine 341) is a Phosphoserine. Threonine 355 carries the phosphothreonine modification.

It localises to the nucleus. In Homo sapiens (Human), this protein is Single-stranded DNA-binding protein 4 (SSBP4).